The chain runs to 514 residues: Cobyric acid synthase (514 aa).

The GATase cobBQ-type domain occupies Leu249–Ile448. The active-site Nucleophile is Cys330. His440 is a catalytic residue.

Belongs to the CobB/CobQ family. CobQ subfamily.

It functions in the pathway cofactor biosynthesis; adenosylcobalamin biosynthesis. Catalyzes amidations at positions B, D, E, and G on adenosylcobyrinic A,C-diamide. NH(2) groups are provided by glutamine, and one molecule of ATP is hydrogenolyzed for each amidation. This chain is Cobyric acid synthase, found in Ruminiclostridium cellulolyticum (strain ATCC 35319 / DSM 5812 / JCM 6584 / H10) (Clostridium cellulolyticum).